Here is a 422-residue protein sequence, read N- to C-terminus: Serine--tRNA ligase (422 aa).

229 to 231 (TAE) is a binding site for L-serine. An ATP-binding site is contributed by 260–262 (RKE). Glutamate 283 contacts L-serine. ATP is bound at residue 347–350 (EISS). Serine 383 contributes to the L-serine binding site.

It belongs to the class-II aminoacyl-tRNA synthetase family. Type-1 seryl-tRNA synthetase subfamily. As to quaternary structure, homodimer. The tRNA molecule binds across the dimer.

It is found in the cytoplasm. It catalyses the reaction tRNA(Ser) + L-serine + ATP = L-seryl-tRNA(Ser) + AMP + diphosphate + H(+). It carries out the reaction tRNA(Sec) + L-serine + ATP = L-seryl-tRNA(Sec) + AMP + diphosphate + H(+). Its pathway is aminoacyl-tRNA biosynthesis; selenocysteinyl-tRNA(Sec) biosynthesis; L-seryl-tRNA(Sec) from L-serine and tRNA(Sec): step 1/1. Its function is as follows. Catalyzes the attachment of serine to tRNA(Ser). Is also able to aminoacylate tRNA(Sec) with serine, to form the misacylated tRNA L-seryl-tRNA(Sec), which will be further converted into selenocysteinyl-tRNA(Sec). In Natranaerobius thermophilus (strain ATCC BAA-1301 / DSM 18059 / JW/NM-WN-LF), this protein is Serine--tRNA ligase.